Reading from the N-terminus, the 825-residue chain is Tuftelin-interacting protein 11 (825 aa).

A disordered region spans residues 1 to 135 (MSMSHLYGKD…RTFAGGIKSN (135 aa)). A compositionally biased stretch (acidic residues) spans 11–25 (EDSDGVEMENFEITD). 2 stretches are compositionally biased toward basic and acidic residues: residues 41-61 (QTKEEATYGMWAERDSDDERP) and 85-114 (PAAEEKSDSDSDSETQARRETFPKDFEAKK). The span at 122–135 (KPSQRTFAGGIKSN) shows a compositional bias: polar residues. The region spanning 145–191 (TKGIGQKLLQKMGYVQGRGLGKNAQGIIAPIEAKQRKGKGAVGAYGS) is the G-patch domain.

Belongs to the TFP11/STIP family. Identified in the spliceosome C complex.

It is found in the nucleus. Involved in pre-mRNA splicing, specifically in spliceosome disassembly during late-stage splicing events. The sequence is that of Tuftelin-interacting protein 11 (tfip11) from Xenopus tropicalis (Western clawed frog).